We begin with the raw amino-acid sequence, 528 residues long: Keratin, type II cytoskeletal 78 (528 aa).

Residues 1 to 104 (MSLSPCRARR…DPQFQVVRTQ (104 aa)) form a head region. A disordered region spans residues 23–45 (VGRGRTGFSSRSLSSFGGCRGGS). Residues 24–39 (GRGRTGFSSRSLSSFG) show a composition bias toward low complexity. The interval 105–140 (ETQQIRVLNNQFASFIDKVRFLEQQNKVLETKWHLL) is coil 1A. The IF rod domain maps to 105–418 (ETQQIRVLNN…RLLEGEECRM (314 aa)). The tract at residues 141–159 (QQQGLSDRPQGLESFFEAY) is linker 1. The segment at 160 to 252 (LVRLRTQLEE…LYEEELGQLQ (93 aa)) is coil 1B. The segment at 253 to 275 (TQASDMSVVLSMDNNRCLDFRDL) is linker 12. The tract at residues 276-415 (IAEVRARYEE…TYRRLLEGEE (140 aa)) is coil 2. Residues 416–528 (CRMSGECASQ…ESSLKTSVTY (113 aa)) are tail.

This sequence belongs to the intermediate filament family. In terms of assembly, heterotetramer of two type I and two type II keratins.

This Bos taurus (Bovine) protein is Keratin, type II cytoskeletal 78 (KRT78).